Reading from the N-terminus, the 190-residue chain is Nuclear transcription factor Y subunit B-2 (190 aa).

The disordered stretch occupies residues M1–R30. The DNA-binding element occupies L32–S38. The segment at M59–V70 is subunit association domain (SAD). The tract at residues H168–T190 is disordered. Residues A172 to A184 are compositionally biased toward gly residues.

It belongs to the NFYB/HAP3 subunit family. In terms of assembly, heterotrimeric transcription factor composed of three components, NF-YA, NF-YB and NF-YC. NF-YB and NF-YC must interact and dimerize for NF-YA association and DNA binding. Binds directly with DPB3-1. Ubiquitous. Predominantly expressed in flowers and siliques.

Its subcellular location is the nucleus. Component of the NF-Y/HAP transcription factor complex. The NF-Y complex stimulates the transcription of various genes by recognizing and binding to a CCAAT motif in promoters. This is Nuclear transcription factor Y subunit B-2 from Arabidopsis thaliana (Mouse-ear cress).